The primary structure comprises 72 residues: Translation initiation factor IF-1 (72 aa).

The 72-residue stretch at 1–72 (MSKNDVIEVE…TRGRIVYRFK (72 aa)) folds into the S1-like domain.

It belongs to the IF-1 family. Component of the 30S ribosomal translation pre-initiation complex which assembles on the 30S ribosome in the order IF-2 and IF-3, IF-1 and N-formylmethionyl-tRNA(fMet); mRNA recruitment can occur at any time during PIC assembly.

The protein localises to the cytoplasm. One of the essential components for the initiation of protein synthesis. Stabilizes the binding of IF-2 and IF-3 on the 30S subunit to which N-formylmethionyl-tRNA(fMet) subsequently binds. Helps modulate mRNA selection, yielding the 30S pre-initiation complex (PIC). Upon addition of the 50S ribosomal subunit IF-1, IF-2 and IF-3 are released leaving the mature 70S translation initiation complex. The sequence is that of Translation initiation factor IF-1 from Desulforamulus reducens (strain ATCC BAA-1160 / DSM 100696 / MI-1) (Desulfotomaculum reducens).